We begin with the raw amino-acid sequence, 509 residues long: MDPSSAGAGGNSLASASCGDAQKRRVCYFYDPEVGNYYYGQGHPMKPHRVRMTHALLAHYGLLAPAKMQVLRPLPARDRDLCRFHSDDYVAFLRAVTPETQFDQIRSLRRFNVGEDCPVFDGLYAYCQTYAGASVGAAVKLNHGTHDIAINWSGGLHHAKKSEASGFCYVNDIVLAILELLKLHERVLYIDIDIHHGDGVEEAFYTTNRVMTVSFHKFGDYFPGTGDIRDIGYSEGKYYCLNVPLDDGIDDDSYQSIFKPIISKVMEMYRPGAVVLQCGADSLSGDRLGCFNLSGKGHAECVKFMRSFNVPLLLLGGGGYTIRNVARCWCYETGVALGEELREKLPYNEYYEYFGPEYSLYVAASNMENRNTNKQLEEIKCNILDNLSKLQHAPSVQFEERIPETKLPEPDEDQDDPDERHDPDSDMLLDDHKPMGHSARSLIHNIGVKREITETETKDQHGKRLTTEHKVPEPMADDLGSSKQVPTADANSMAINAPGNAKNEPGSSL.

The histone deacetylase stretch occupies residues 24 to 338 (RRVCYFYDPE…WCYETGVALG (315 aa)). H158 (proton donor/acceptor) is an active-site residue. 3 residues coordinate Zn(2+): D193, H195, and D281. The tract at residues 394 to 509 (PSVQFEERIP…NAKNEPGSSL (116 aa)) is disordered. Basic and acidic residues-rich tracts occupy residues 398 to 409 (FEERIPETKLPE), 418 to 434 (DERHDPDSDMLLDDHKP), and 448 to 472 (VKREITETETKDQHGKRLTTEHKVP). Positions 481–494 (SSKQVPTADANSMA) are enriched in polar residues.

Belongs to the histone deacetylase family. HD Type 1 subfamily. Requires Zn(2+) as cofactor. As to expression, expressed in roots.

It localises to the nucleus. It carries out the reaction N(6)-acetyl-L-lysyl-[histone] + H2O = L-lysyl-[histone] + acetate. Responsible for the deacetylation of lysine residues on the N-terminal part of the core histones (H2A, H2B, H3 and H4). Histone deacetylation gives a tag for epigenetic repression and plays an important role in transcriptional regulation, cell cycle progression and developmental events. Histone deacetylases act via the formation of large multiprotein complexes. The chain is Histone deacetylase 2 from Oryza sativa subsp. japonica (Rice).